Reading from the N-terminus, the 439-residue chain is Mitochondrial distribution and morphology protein 12 (439 aa).

Residues 1-439 (MSIDINWEAA…VYPSFWTFLV (439 aa)) enclose the SMP-LTD domain. Residues 71–84 (EEDEGDEDFSDDQD) are compositionally biased toward acidic residues. 3 disordered regions span residues 71 to 104 (EEDEGDEDFSDDQDGAPKHPPTIATERSGAGTWQ), 182 to 278 (TPLA…HEKK), and 362 to 385 (YIPGINPIGGGASGGAASSRRRDD). The span at 212–229 (DYPRPVHRQTDTDIDSGH) shows a compositional bias: basic and acidic residues. Residues 230-255 (SRPSTADTLNSINSQRISNPALSHPH) show a composition bias toward polar residues. Over residues 256–269 (SSNESHPDTRDHSP) the composition is skewed to basic and acidic residues.

Belongs to the MDM12 family. Component of the ER-mitochondria encounter structure (ERMES) or MDM complex, composed of MMM1, MDM10, MDM12 and MDM34. An MMM1 homodimer associates with one molecule of MDM12 on each side in a pairwise head-to-tail manner, and the SMP-LTD domains of MMM1 and MDM12 generate a continuous hydrophobic tunnel for phospholipid trafficking.

It is found in the mitochondrion outer membrane. It localises to the endoplasmic reticulum membrane. Component of the ERMES/MDM complex, which serves as a molecular tether to connect the endoplasmic reticulum (ER) and mitochondria. Components of this complex are involved in the control of mitochondrial shape and protein biogenesis, and function in nonvesicular lipid trafficking between the ER and mitochondria. MDM12 is required for the interaction of the ER-resident membrane protein MMM1 and the outer mitochondrial membrane-resident beta-barrel protein MDM10. The MDM12-MMM1 subcomplex functions in the major beta-barrel assembly pathway that is responsible for biogenesis of all mitochondrial outer membrane beta-barrel proteins, and acts in a late step after the SAM complex. The MDM10-MDM12-MMM1 subcomplex further acts in the TOM40-specific pathway after the action of the MDM12-MMM1 complex. Essential for establishing and maintaining the structure of mitochondria and maintenance of mtDNA nucleoids. The sequence is that of Mitochondrial distribution and morphology protein 12 from Uncinocarpus reesii (strain UAMH 1704).